Here is a 641-residue protein sequence, read N- to C-terminus: Sodium-dependent nutrient amino acid transporter 1 (641 aa).

Positions 1–38 (MELKGVQPSNGSSNGSGNGATNAASTEKTDAEKPTAER) are disordered. Residues 1–40 (MELKGVQPSNGSSNGSGNGATNAASTEKTDAEKPTAERTN) lie on the Cytoplasmic side of the membrane. Over residues 9-26 (SNGSSNGSGNGATNAAST) the composition is skewed to low complexity. Over residues 27–36 (EKTDAEKPTA) the composition is skewed to basic and acidic residues. 3 consecutive transmembrane segments (helical) span residues 41-61 (WGNG…LGNV), 74-94 (GAFL…MYYL), and 111-131 (SVVP…ICII). Residues N185 and N190 are each glycosylated (N-linked (GlcNAc...) asparagine). Transmembrane regions (helical) follow at residues 229–249 (PDWK…LVIM), 258–278 (AAYF…IRAV), 307–327 (AVVQ…MFAS), 341–361 (IVTT…FAIL), 401–421 (LFSV…IVAL), 447–467 (VCGF…ILTL), 474–494 (TYVV…VYGL), 516–536 (CWSF…MVTI), and 552–572 (IAGW…GLWY).

The protein belongs to the sodium:neurotransmitter symporter (SNF) (TC 2.A.22) family. In terms of tissue distribution, in larvae, weak specific expression in the anterior midgut just proximal to the gastric caeca reproductive rudiments, common ureters of the Malpighian tubules, and distal swollen portion of the anterior pair of Malpighian tubules. Expression is also seen in the imaginal disks of the head; brain hemispheres and the ventral ganglion. Stronger expression in the posterior midgut.

Its subcellular location is the membrane. Functionally, unusual broad substrate spectrum amino acid:sodium cotransporter that promotes absorption of the D isomers of essential amino acids. Neutral amino acids are the preferred substrates, especially methionine and phenylalanine. The protein is Sodium-dependent nutrient amino acid transporter 1 (NAAT1) of Drosophila melanogaster (Fruit fly).